The following is a 435-amino-acid chain: MSEQQPEKTVAPVAEVPEVPEIPEAPESQPVTTTAAEAPKDTVPAPEAHPETHSEPKAEPAADVAAPLPAVAEAPAEAEDTAAAEQPEPEPAAEQQPEKPAYLAQNPALGQFFDRLPAILSATGHEEMWGVSLKDSDDVPTVNVLIKFLRANEGNVKLAEEQLTKALKWRQEMNPTALVESATYNAAKFGGLGYLTTYKDANGAQTVVTWNIYGGVKDMNKTFGDMDEFVKWRVALMEMAVKELKMAEATSVIEYDGEDPYQMLQVHDYLNVSFLRLNPAIKAATKKTIEVFTTAYPELLREKFFVNVPAIMGWMFAAMKVFLSKNTTRKFHPISNGANLAREFPALKDQFPKAYGGGGPALQDGARTVNLVQEPEAVPVPAPAPAPAPAAAEPAPQEEAKEESKEEPKAEPVAEPAKADAAVTTQEAATTAEAK.

Residues 1-99 (MSEQQPEKTV…EPAAEQQPEK (99 aa)) are disordered. The span at 10–19 (VAPVAEVPEV) shows a compositional bias: low complexity. The segment covering 48 to 60 (AHPETHSEPKAEP) has biased composition (basic and acidic residues). Low complexity-rich tracts occupy residues 61 to 75 (AADV…AEAP) and 83 to 99 (AAEQ…QPEK). Positions 182–363 (ATYNAAKFGG…AYGGGGPALQ (182 aa)) constitute a CRAL-TRIO domain. Heme contacts are provided by Tyr-213, Arg-233, His-267, Tyr-269, and Lys-303. Residues 378 to 388 (VPVPAPAPAPA) show a composition bias toward pro residues. A disordered region spans residues 378-435 (VPVPAPAPAPAPAAAEPAPQEEAKEESKEEPKAEPVAEPAKADAAVTTQEAATTAEAK). Over residues 398–412 (EEAKEESKEEPKAEP) the composition is skewed to basic and acidic residues. The segment covering 413-435 (VAEPAKADAAVTTQEAATTAEAK) has biased composition (low complexity).

It belongs to the SFH5 family. Heme b is required as a cofactor.

The protein localises to the cytoplasm. Its subcellular location is the endoplasmic reticulum membrane. It is found in the microsome membrane. It catalyses the reaction a 1,2-diacyl-sn-glycero-3-phospho-(1D-myo-inositol)(in) = a 1,2-diacyl-sn-glycero-3-phospho-(1D-myo-inositol)(out). Its function is as follows. Non-classical phosphatidylinositol (PtdIns) transfer protein (PITP), which exhibits PtdIns-binding/transfer activity in the absence of detectable PtdCho-binding/transfer activity. Regulates PtdIns(4,5)P2 homeostasis at the plasma membrane. Heme-binding protein that may play a role in organic oxidant-induced stress responses. The polypeptide is Phosphatidylinositol transfer protein sfh5 (sfh5) (Aspergillus clavatus (strain ATCC 1007 / CBS 513.65 / DSM 816 / NCTC 3887 / NRRL 1 / QM 1276 / 107)).